The sequence spans 369 residues: Anthranilate phosphoribosyltransferase (369 aa).

5-phospho-alpha-D-ribose 1-diphosphate-binding positions include glycine 99, 102–103, 109–112, 127–135, and serine 139; these read GD, NVST, and KHGNRGVSS. Residue glycine 99 participates in anthranilate binding. Residue serine 111 coordinates Mg(2+). Position 130 (asparagine 130) interacts with anthranilate. Arginine 185 provides a ligand contact to anthranilate. Positions 244 and 245 each coordinate Mg(2+).

This sequence belongs to the anthranilate phosphoribosyltransferase family. In terms of assembly, homodimer. It depends on Mg(2+) as a cofactor.

It catalyses the reaction N-(5-phospho-beta-D-ribosyl)anthranilate + diphosphate = 5-phospho-alpha-D-ribose 1-diphosphate + anthranilate. The protein operates within amino-acid biosynthesis; L-tryptophan biosynthesis; L-tryptophan from chorismate: step 2/5. Functionally, catalyzes the transfer of the phosphoribosyl group of 5-phosphorylribose-1-pyrophosphate (PRPP) to anthranilate to yield N-(5'-phosphoribosyl)-anthranilate (PRA). The sequence is that of Anthranilate phosphoribosyltransferase from Psychrobacter sp. (strain PRwf-1).